A 484-amino-acid polypeptide reads, in one-letter code: Glutamate--tRNA ligase (484 aa).

The short motif at 11–21 (PSPTGYPHLGN) is the 'HIGH' region element. Zn(2+) is bound by residues Cys-108, Cys-110, Cys-135, and Asp-137. The 'KMSKS' region motif lies at 245–249 (KLSKR). Residue Lys-248 participates in ATP binding.

This sequence belongs to the class-I aminoacyl-tRNA synthetase family. Glutamate--tRNA ligase type 1 subfamily. As to quaternary structure, monomer. Requires Zn(2+) as cofactor.

It is found in the cytoplasm. It carries out the reaction tRNA(Glu) + L-glutamate + ATP = L-glutamyl-tRNA(Glu) + AMP + diphosphate. Functionally, catalyzes the attachment of glutamate to tRNA(Glu) in a two-step reaction: glutamate is first activated by ATP to form Glu-AMP and then transferred to the acceptor end of tRNA(Glu). The polypeptide is Glutamate--tRNA ligase (Dehalococcoides mccartyi (strain ATCC BAA-2266 / KCTC 15142 / 195) (Dehalococcoides ethenogenes (strain 195))).